A 180-amino-acid chain; its full sequence is NAD(P)H-quinone oxidoreductase subunit I, chloroplastic (180 aa).

4Fe-4S ferredoxin-type domains are found at residues 55–84 (GRIH…VDWR) and 95–124 (LNYS…MTEE). [4Fe-4S] cluster contacts are provided by Cys64, Cys67, Cys70, Cys74, Cys104, Cys107, Cys110, and Cys114.

This sequence belongs to the complex I 23 kDa subunit family. As to quaternary structure, NDH is composed of at least 16 different subunits, 5 of which are encoded in the nucleus. Requires [4Fe-4S] cluster as cofactor.

It localises to the plastid. Its subcellular location is the chloroplast thylakoid membrane. The enzyme catalyses a plastoquinone + NADH + (n+1) H(+)(in) = a plastoquinol + NAD(+) + n H(+)(out). It carries out the reaction a plastoquinone + NADPH + (n+1) H(+)(in) = a plastoquinol + NADP(+) + n H(+)(out). NDH shuttles electrons from NAD(P)H:plastoquinone, via FMN and iron-sulfur (Fe-S) centers, to quinones in the photosynthetic chain and possibly in a chloroplast respiratory chain. The immediate electron acceptor for the enzyme in this species is believed to be plastoquinone. Couples the redox reaction to proton translocation, and thus conserves the redox energy in a proton gradient. This Drimys granadensis protein is NAD(P)H-quinone oxidoreductase subunit I, chloroplastic.